The primary structure comprises 318 residues: Type II methyltransferase M.HaeII (318 aa).

An SAM-dependent MTase C5-type domain is found at 4–304; that stretch reads YKTIDLFAGI…GSMINSLNMA (301 aa). The active site involves cysteine 73.

The protein belongs to the class I-like SAM-binding methyltransferase superfamily. C5-methyltransferase family.

It catalyses the reaction a 2'-deoxycytidine in DNA + S-adenosyl-L-methionine = a 5-methyl-2'-deoxycytidine in DNA + S-adenosyl-L-homocysteine + H(+). In terms of biological role, a methylase, recognizes the double-stranded sequence 5'-RGCGCY-3', methylates C-? on both strands, and protects the DNA from cleavage by the HaeII endonuclease. In Haemophilus aegyptius, this protein is Type II methyltransferase M.HaeII (haeIIM).